Reading from the N-terminus, the 615-residue chain is Dihydroxy-acid dehydratase (615 aa).

A Mg(2+)-binding site is contributed by D83. Position 124 (C124) interacts with [2Fe-2S] cluster. Positions 125 and 126 each coordinate Mg(2+). Position 126 is an N6-carboxylysine (K126). C199 is a [2Fe-2S] cluster binding site. E495 contributes to the Mg(2+) binding site. S521 (proton acceptor) is an active-site residue.

The protein belongs to the IlvD/Edd family. As to quaternary structure, homodimer. Requires [2Fe-2S] cluster as cofactor. The cofactor is Mg(2+).

It carries out the reaction (2R)-2,3-dihydroxy-3-methylbutanoate = 3-methyl-2-oxobutanoate + H2O. The enzyme catalyses (2R,3R)-2,3-dihydroxy-3-methylpentanoate = (S)-3-methyl-2-oxopentanoate + H2O. Its pathway is amino-acid biosynthesis; L-isoleucine biosynthesis; L-isoleucine from 2-oxobutanoate: step 3/4. It participates in amino-acid biosynthesis; L-valine biosynthesis; L-valine from pyruvate: step 3/4. Functionally, functions in the biosynthesis of branched-chain amino acids. Catalyzes the dehydration of (2R,3R)-2,3-dihydroxy-3-methylpentanoate (2,3-dihydroxy-3-methylvalerate) into 2-oxo-3-methylpentanoate (2-oxo-3-methylvalerate) and of (2R)-2,3-dihydroxy-3-methylbutanoate (2,3-dihydroxyisovalerate) into 2-oxo-3-methylbutanoate (2-oxoisovalerate), the penultimate precursor to L-isoleucine and L-valine, respectively. In Corynebacterium jeikeium (strain K411), this protein is Dihydroxy-acid dehydratase.